We begin with the raw amino-acid sequence, 466 residues long: ATP synthase subunit beta (466 aa).

153–160 (GGAGVGKT) lines the ATP pocket.

The protein belongs to the ATPase alpha/beta chains family. In terms of assembly, F-type ATPases have 2 components, CF(1) - the catalytic core - and CF(0) - the membrane proton channel. CF(1) has five subunits: alpha(3), beta(3), gamma(1), delta(1), epsilon(1). CF(0) has three main subunits: a(1), b(2) and c(9-12). The alpha and beta chains form an alternating ring which encloses part of the gamma chain. CF(1) is attached to CF(0) by a central stalk formed by the gamma and epsilon chains, while a peripheral stalk is formed by the delta and b chains.

The protein localises to the cell membrane. It carries out the reaction ATP + H2O + 4 H(+)(in) = ADP + phosphate + 5 H(+)(out). Produces ATP from ADP in the presence of a proton gradient across the membrane. The catalytic sites are hosted primarily by the beta subunits. The chain is ATP synthase subunit beta from Leuconostoc citreum (strain KM20).